Reading from the N-terminus, the 154-residue chain is Immunity protein YwqK (154 aa).

As to quaternary structure, probably interacts with cognate toxin YwqJ but not with other non-cognate LXG toxins. The interaction inhibits the toxic activity of YwqJ.

The protein resides in the cytoplasm. Its function is as follows. Immunity component of one of 6 LXG toxin-immunity modules in this strain. They promote kin selection, mediate competition in biofilms, and drive spatial segregation of different strains, indicating that LXG toxins may help avoid warfare between strains in biofilms. Mediates intercellular competition during biofilm formation; disruption of the operon disadvantages the bacteria, but overexpression of the cognate immunity protein restores growth in competition with wild-type. In situ neutralizes the toxic effect of cognate toxin YqcG. Probably neutralizes the ability to inhibit growth of cognate toxin YwqJ. Probably does not have immunity protein activity on other LXG toxins. This chain is Immunity protein YwqK (ywqK), found in Bacillus subtilis (strain 168).